A 795-amino-acid chain; its full sequence is ATP-dependent RNA helicase DHX15 (795 aa).

Residues 1–108 are disordered; the sequence is MSKRHRLDLG…HSTHAGHAGH (108 aa). Ser-15 bears the Phosphoserine mark. Residues 20–62 show a composition bias toward basic and acidic residues; it reads AGTDGKDRDRDRDREDRSKDRDRERDRGDREREREKEKEKELR. The span at 79–108 shows a compositional bias: low complexity; it reads ASHSAHSTHSAHSAHSTHSAHSTHAGHAGH. The region spanning 147 to 313 is the Helicase ATP-binding domain; sequence TDILVRHQSF…FDNCPLLTIP (167 aa). 160-167 serves as a coordination point for ATP; the sequence is GETGSGKT. The DEAH box signature appears at 260 to 263; it reads DEAH. A Helicase C-terminal domain is found at 338 to 518; that stretch reads TVIQIHMCEE…SVVLQLKKLG (181 aa). Lys-488 is modified (N6-acetyllysine). Residue Lys-786 forms a Glycyl lysine isopeptide (Lys-Gly) (interchain with G-Cter in SUMO2) linkage.

This sequence belongs to the DEAD box helicase family. DEAH subfamily. DDX15/PRP43 sub-subfamily. As to quaternary structure, component of the U11/U12 snRNPs that are part of the U12-type spliceosome. Identified in the Intron Large spliceosome complex (IL, also named intron lariat spliceosome), a post-mRNA release spliceosomal complex containing the excised intron, U2, U5 and U6 snRNPs, and splicing factors; the association may be transient. The IL complex exists in two distinct conformations, one with the DHX15 (ILS2) and one without (ILS1). Interacts with TFIP11 (via G-patch domain); indicative for a recruitment to the IL complex. Interacts with SSB/La. Interacts with GPATCH2 (via G-patch domain); promoting the RNA helicase activity. Interacts with NKRF (via G-patch domain); promoting the RNA helicase activity. Interacts with NLRP6.

The protein resides in the nucleus. It localises to the nucleolus. It catalyses the reaction ATP + H2O = ADP + phosphate + H(+). With respect to regulation, ATPase activity is enhanced upon binding to G-patch domain-containing proteins. G-patch domain-containing proteins act like a brace that tethers mobile sections of DHX15 together, stabilizing a functional conformation with high RNA affinity, thereby promoting the ATPase activity. Functionally, RNA helicase involved in mRNA processing and antiviral innate immunity. Pre-mRNA processing factor involved in disassembly of spliceosomes after the release of mature mRNA. In cooperation with TFIP11 seem to be involved in the transition of the U2, U5 and U6 snRNP-containing IL complex to the snRNP-free IS complex leading to efficient debranching and turnover of excised introns. Plays a key role in antiviral innate immunity by promoting both MAVS-dependent signaling and NLRP6 inflammasome. Acts as an RNA virus sensor: recognizes and binds viral double stranded RNA (dsRNA) and activates the MAVS-dependent signaling to produce interferon-beta and interferon lambda-3 (IFNL3). Involved in intestinal antiviral innate immunity together with NLRP6: recognizes and binds viral dsRNA and promotes activation of the NLRP6 inflammasome in intestinal epithelial cells to restrict infection by enteric viruses. The NLRP6 inflammasome acts by promoting maturation and secretion of IL18 in the extracellular milieu. Also involved in antibacterial innate immunity by promoting Wnt-induced antimicrobial protein expression in Paneth cells. In Pongo abelii (Sumatran orangutan), this protein is ATP-dependent RNA helicase DHX15.